The primary structure comprises 450 residues: NADP-specific glutamate dehydrogenase (450 aa).

The active site involves Lys-111.

It belongs to the Glu/Leu/Phe/Val dehydrogenases family. As to quaternary structure, homohexamer.

The catalysed reaction is L-glutamate + NADP(+) + H2O = 2-oxoglutarate + NH4(+) + NADPH + H(+). This Hebeloma cylindrosporum protein is NADP-specific glutamate dehydrogenase.